A 409-amino-acid polypeptide reads, in one-letter code: Probable glutaryl-CoA dehydrogenase, mitochondrial (409 aa).

110 to 111 (RS) provides a ligand contact to substrate. FAD-binding positions include 149–152 (FGLT), Ser158, and 184–186 (WIS). Substrate is bound at residue Ser158. Residues 261–265 (FGCLN) and Arg268 each bind substrate. Glu388 acts as the Proton acceptor in catalysis. The FAD site is built by Thr390 and Phe408.

Belongs to the acyl-CoA dehydrogenase family. The cofactor is FAD.

Its subcellular location is the mitochondrion matrix. It catalyses the reaction glutaryl-CoA + oxidized [electron-transfer flavoprotein] + 2 H(+) = (2E)-butenoyl-CoA + reduced [electron-transfer flavoprotein] + CO2. Its pathway is amino-acid metabolism; lysine degradation. It participates in amino-acid metabolism; tryptophan metabolism. This Caenorhabditis elegans protein is Probable glutaryl-CoA dehydrogenase, mitochondrial.